The chain runs to 872 residues: Alanine--tRNA ligase (872 aa).

The Zn(2+) site is built by histidine 563, histidine 567, cysteine 665, and histidine 669.

It belongs to the class-II aminoacyl-tRNA synthetase family. Requires Zn(2+) as cofactor.

The protein localises to the cytoplasm. The enzyme catalyses tRNA(Ala) + L-alanine + ATP = L-alanyl-tRNA(Ala) + AMP + diphosphate. Catalyzes the attachment of alanine to tRNA(Ala) in a two-step reaction: alanine is first activated by ATP to form Ala-AMP and then transferred to the acceptor end of tRNA(Ala). Also edits incorrectly charged Ser-tRNA(Ala) and Gly-tRNA(Ala) via its editing domain. The sequence is that of Alanine--tRNA ligase from Bacteroides fragilis (strain YCH46).